The following is a 269-amino-acid chain: Regulatory protein RecX (269 aa).

Belongs to the RecX family.

The protein resides in the cytoplasm. Its function is as follows. Modulates RecA activity. In Listeria welshimeri serovar 6b (strain ATCC 35897 / DSM 20650 / CCUG 15529 / CIP 8149 / NCTC 11857 / SLCC 5334 / V8), this protein is Regulatory protein RecX.